A 257-amino-acid chain; its full sequence is Enterotoxin type E (257 aa).

A signal peptide spans 1 to 27 (MKKTAFILLLFIALTLTTSPLVNGSEK). A disulfide bridge links cysteine 120 with cysteine 130. Zn(2+) contacts are provided by histidine 211, histidine 249, and aspartate 251.

Belongs to the staphylococcal/streptococcal toxin family. In terms of assembly, interacts with host MHC class II molecules composed of alpha/HLA-DRA and beta/HLA-DRB1 chains. Interacts with host T-cell receptor beta variable TRBV7-9. Zn(2+) serves as cofactor.

It localises to the secreted. Functionally, staphylococcal enterotoxin that activates the host immune system by binding as unprocessed molecules to major histocompatibility (MHC) complex class II and T-cell receptor (TCR) molecules. In turn, this ternary complex activates a large number of T-lymphocytes initiating a systemic release of pro-inflammatory cytokines. Also causes the intoxication staphylococcal food poisoning syndrome. The protein is Enterotoxin type E (entE) of Staphylococcus aureus.